The primary structure comprises 535 residues: Arylsulfatase G (535 aa).

An N-terminal signal peptide occupies residues 1–18 (MGWLFLKVLFLGVTFLGC). Ca(2+) is bound by residues Asp44, Asp45, and Cys84. The active-site Nucleophile is Cys84. Cys84 is subject to 3-oxoalanine (Cys). Asn117 is a glycosylation site (N-linked (GlcNAc...) asparagine). Residue Lys137 participates in substrate binding. The active site involves His139. Residue Ser162 participates in substrate binding. A glycan (N-linked (GlcNAc...) asparagine) is linked at Asn215. Substrate is bound at residue His251. Asp302 and Asn303 together coordinate Ca(2+). Asn356 and Asn497 each carry an N-linked (GlcNAc...) asparagine glycan.

It belongs to the sulfatase family. Requires Ca(2+) as cofactor. In terms of processing, N-glycosylated with both high mannose and complex type sugars. The conversion to 3-oxoalanine (also known as C-formylglycine, FGly), of a serine or cysteine residue in prokaryotes and of a cysteine residue in eukaryotes, is critical for catalytic activity. Post-translationally, the 63-kDa precursor undergoes proteolytic processing in two steps, yielding two fragments in the first step (apparent molecular masses of 44 and 18 kDa). In the second step, the 44-kDa fragment is processed further to the 34- and 10-kDa chains. The 10-kDa chain is a cleavage product of the 44-kDa fragment but linked to the 18-kDa chain through a disulfide bridge.

The protein localises to the lysosome. The catalysed reaction is an aryl sulfate + H2O = a phenol + sulfate + H(+). It carries out the reaction Hydrolysis of the 3-sulfate groups of the N-sulfo-D-glucosamine 3-O-sulfate units of heparin.. Functionally, displays arylsulfatase activity with pseudosubstrates at acidic pH, such as p-nitrocatechol sulfate. Catalyzes the hydrolysis of the 3-sulfate groups of the N-sulfo-D-glucosamine 3-O-sulfate units of heparin. The polypeptide is Arylsulfatase G (ARSG) (Canis lupus familiaris (Dog)).